Reading from the N-terminus, the 595-residue chain is MTTIASEAYIDDSVNFESFKLDARLLQAIKGSGFTHPTLIQSHAIPLALEEKRDIIAKAATGSGKTLAYLIPVIQTILDYKKSRTNGDEPGTLGIIMVPTRELTQQVTAVLEKLIHYCSKDIKVLNLAADLSTSVLNTLLSENPEIIVGTPSKILNILERNTDTVGIDDLKFLVIDEVDLVLTFGYQDDLDKIAEYLPLKKNLQTFLMSATLSDDIQSLKQKYCRSPAIIKFNDDEINKDKTKLVQYYVRVGEFDKFLFCYVIFKLGLIKGKTLVFVNNIDRGYRLKLVLEQFGIKSCILNNELPANSRQHIVDQFNKNVYHLLIATDDADNIKEFDDEQKDDIQVEEKNDETNTVVAEESTNSTTGIKSKTKNNYKQDKEYGVSRGVDFKNVACVVNFDLPTTAKAYVHRVGRTARAGKSGTAISFVVPLKEFGKHKPSMLPSAKKDEKILSRIIKQQSKLGLEIQPYSFDLKQVEGFRYRMEDGFRAVTQVAVREARIKELKEELLASEKLKRHFEENPIELKSLRHDKELHPARVQNHLKRIPEYLLPENARTDKKKISFIPFHKPNKVGKKSKNSKNKKRKGGKTDALKKF.

A Q motif motif is present at residues 14-42; the sequence is VNFESFKLDARLLQAIKGSGFTHPTLIQS. A Helicase ATP-binding domain is found at 46 to 230; it reads PLALEEKRDI…QKYCRSPAII (185 aa). Residue 59–66 participates in ATP binding; it reads AATGSGKT. The DEAD box motif lies at 176–179; the sequence is DEVD. The 235-residue stretch at 243 to 477 folds into the Helicase C-terminal domain; that stretch reads KLVQYYVRVG…PYSFDLKQVE (235 aa). Disordered regions lie at residues 349–371 and 560–595; these read KNDETNTVVAEESTNSTTGIKSK and KISFIPFHKPNKVGKKSKNSKNKKRKGGKTDALKKF. The span at 353 to 371 shows a compositional bias: polar residues; it reads TNTVVAEESTNSTTGIKSK. Positions 568–586 are enriched in basic residues; it reads KPNKVGKKSKNSKNKKRKG.

It belongs to the DEAD box helicase family. DDX56/DBP9 subfamily.

It is found in the nucleus. Its subcellular location is the nucleolus. The enzyme catalyses ATP + H2O = ADP + phosphate + H(+). In terms of biological role, ATP-binding RNA helicase involved in the biogenesis of 60S ribosomal subunits and is required for the normal formation of 25S and 5.8S rRNAs. This chain is ATP-dependent RNA helicase DBP9 (DBP9), found in Candida glabrata (strain ATCC 2001 / BCRC 20586 / JCM 3761 / NBRC 0622 / NRRL Y-65 / CBS 138) (Yeast).